The following is a 734-amino-acid chain: Regulator of G-protein signaling rgs-6 (734 aa).

The segment at 1–24 is disordered; the sequence is MSTPCSGNEPATPTNTSPNNETSN. The segment covering 8–24 has biased composition (low complexity); the sequence is NEPATPTNTSPNNETSN. In terms of domain architecture, RGS spans 46–157; the sequence is IFKKVIRDPV…YDCWPRFLRS (112 aa). Disordered regions lie at residues 162 to 236, 489 to 515, and 538 to 734; these read QPSF…SPTH, HAVS…YSPA, and VNAG…AAYV. Residues 166–176 are compositionally biased toward acidic residues; sequence TDEELAADDED. Polar residues predominate over residues 180 to 191; it reads HSQPTSLNNTNE. Positions 194–208 are enriched in low complexity; that stretch reads AAAQQSQPAPNAPAA. Composition is skewed to polar residues over residues 494 to 506 and 538 to 557; these read SDPN…SQDR and VNAG…SKNR. 2 stretches are compositionally biased toward basic and acidic residues: residues 563 to 585 and 606 to 619; these read SKTE…RSDD and TTEE…KSGD. Positions 642–694 are enriched in low complexity; that stretch reads AAAAAAGASPSTSAPSTSTSVQTKTTTSPTKSPTSTTITTSGTTTSATSSVAT. Polar residues-rich tracts occupy residues 705-715 and 724-734; these read SASTPATSSQL and RESSWQTAAYV.

The chain is Regulator of G-protein signaling rgs-6 from Caenorhabditis elegans.